The chain runs to 240 residues: Large ribosomal subunit protein uL2 (240 aa).

Residues 1–11 (MGKRLISQNRG) are compositionally biased toward polar residues. Disordered regions lie at residues 1 to 31 (MGKR…VKYR) and 206 to 240 (GGGR…TGRK). 2 stretches are compositionally biased toward basic residues: residues 13–28 (GTPK…KGAV) and 224–240 (SPGR…TGRK).

Belongs to the universal ribosomal protein uL2 family. In terms of assembly, part of the 50S ribosomal subunit. Forms a bridge to the 30S subunit in the 70S ribosome.

Its function is as follows. One of the primary rRNA binding proteins. Required for association of the 30S and 50S subunits to form the 70S ribosome, for tRNA binding and peptide bond formation. It has been suggested to have peptidyltransferase activity; this is somewhat controversial. Makes several contacts with the 16S rRNA in the 70S ribosome. The chain is Large ribosomal subunit protein uL2 from Methanococcus maripaludis (strain C6 / ATCC BAA-1332).